The chain runs to 229 residues: 3-isopropylmalate dehydratase small subunit (229 aa).

Positions 208 to 229 are disordered; sequence KIESAREPDDDWTGPLADRGII.

It belongs to the LeuD family. LeuD type 1 subfamily. In terms of assembly, heterodimer of LeuC and LeuD.

It catalyses the reaction (2R,3S)-3-isopropylmalate = (2S)-2-isopropylmalate. It functions in the pathway amino-acid biosynthesis; L-leucine biosynthesis; L-leucine from 3-methyl-2-oxobutanoate: step 2/4. Functionally, catalyzes the isomerization between 2-isopropylmalate and 3-isopropylmalate, via the formation of 2-isopropylmaleate. This is 3-isopropylmalate dehydratase small subunit from Bifidobacterium longum subsp. infantis (strain ATCC 15697 / DSM 20088 / JCM 1222 / NCTC 11817 / S12).